A 729-amino-acid chain; its full sequence is Catalase-peroxidase (729 aa).

The interval 1 to 20 (MHNGSNGSVEQRDSMPETSR) is disordered. Positions 10 to 20 (EQRDSMPETSR) are enriched in basic and acidic residues. Positions 91-214 (WHAAGTYRTT…LGATVMGLIY (124 aa)) form a cross-link, tryptophyl-tyrosyl-methioninium (Trp-Tyr) (with M-240). Histidine 92 serves as the catalytic Proton acceptor. The segment at residues 214–240 (YVNPEGPESTPDPEWSAQRIRKSFGRM) is a cross-link (tryptophyl-tyrosyl-methioninium (Tyr-Met) (with W-91)). Histidine 255 contacts heme b.

Belongs to the peroxidase family. Peroxidase/catalase subfamily. In terms of assembly, homodimer or homotetramer. Heme b serves as cofactor. Post-translationally, formation of the three residue Trp-Tyr-Met cross-link is important for the catalase, but not the peroxidase activity of the enzyme.

The enzyme catalyses H2O2 + AH2 = A + 2 H2O. The catalysed reaction is 2 H2O2 = O2 + 2 H2O. Bifunctional enzyme with both catalase and broad-spectrum peroxidase activity. The protein is Catalase-peroxidase of Salinibacter ruber (strain DSM 13855 / M31).